A 198-amino-acid chain; its full sequence is Dephospho-CoA kinase (198 aa).

The DPCK domain maps to 3–198; sequence IVGITGGIGS…LLAKERLELA (196 aa). ATP is bound at residue 11-16; sequence GSGKTT.

The protein belongs to the CoaE family.

It is found in the cytoplasm. It catalyses the reaction 3'-dephospho-CoA + ATP = ADP + CoA + H(+). The protein operates within cofactor biosynthesis; coenzyme A biosynthesis; CoA from (R)-pantothenate: step 5/5. In terms of biological role, catalyzes the phosphorylation of the 3'-hydroxyl group of dephosphocoenzyme A to form coenzyme A. In Dehalococcoides mccartyi (strain ATCC BAA-2266 / KCTC 15142 / 195) (Dehalococcoides ethenogenes (strain 195)), this protein is Dephospho-CoA kinase.